Reading from the N-terminus, the 273-residue chain is Ribosomal RNA small subunit methyltransferase A (273 aa).

Residues His-10, Leu-12, Gly-37, Glu-58, Asp-83, and Asn-108 each contribute to the S-adenosyl-L-methionine site.

Belongs to the class I-like SAM-binding methyltransferase superfamily. rRNA adenine N(6)-methyltransferase family. RsmA subfamily.

The protein resides in the cytoplasm. The enzyme catalyses adenosine(1518)/adenosine(1519) in 16S rRNA + 4 S-adenosyl-L-methionine = N(6)-dimethyladenosine(1518)/N(6)-dimethyladenosine(1519) in 16S rRNA + 4 S-adenosyl-L-homocysteine + 4 H(+). Its function is as follows. Specifically dimethylates two adjacent adenosines (A1518 and A1519) in the loop of a conserved hairpin near the 3'-end of 16S rRNA in the 30S particle. May play a critical role in biogenesis of 30S subunits. In Picosynechococcus sp. (strain ATCC 27264 / PCC 7002 / PR-6) (Agmenellum quadruplicatum), this protein is Ribosomal RNA small subunit methyltransferase A.